A 202-amino-acid chain; its full sequence is Small ribosomal subunit protein uS4c (202 aa).

In terms of domain architecture, S4 RNA-binding spans 90-148 (MRLDNVIFRLGMSSTIPGARQLVNHRHIMINDEMVDTPGYNCKPRDIITLKNISESRSG).

It belongs to the universal ribosomal protein uS4 family. Part of the 30S ribosomal subunit. Contacts protein S5. The interaction surface between S4 and S5 is involved in control of translational fidelity.

It is found in the plastid. The protein localises to the chloroplast. One of the primary rRNA binding proteins, it binds directly to 16S rRNA where it nucleates assembly of the body of the 30S subunit. Its function is as follows. With S5 and S12 plays an important role in translational accuracy. This Haplomitrium hookeri (Hooker's flapwort) protein is Small ribosomal subunit protein uS4c (rps4).